The sequence spans 521 residues: GRAS family protein RAD1 (521 aa).

Positions aspartate 137–lysine 520 constitute a GRAS domain. The interval methionine 144–aspartate 212 is leucine repeat I (LRI). A VHIID region spans residues phenylalanine 231–alanine 301. Positions leucine 262–aspartate 266 match the VHIID motif. Positions valine 311–aspartate 343 are leucine repeat II (LRII). The PFYRE stretch occupies residues leucine 352–asparagine 443. The interval serine 446–lysine 520 is SAW.

It belongs to the GRAS family. As to quaternary structure, interacts with RAM1. Interacts with NSP2.

It localises to the nucleus. Functionally, transcription factor acting as a regulator of arbuscular mycorrhiza (AM)-related genes (e.g. STR). Required for the morphogenesis of arbuscules upon symbiosis with AM fungi (e.g. Glomus versiforme). Also involved in restricting mycorrhizal colonization of the root meristem. The protein is GRAS family protein RAD1 of Medicago truncatula (Barrel medic).